A 459-amino-acid polypeptide reads, in one-letter code: Elongation factor 1-alpha 1 (459 aa).

Positions 5–242 constitute a tr-type G domain; that stretch reads KTHINIVVIG…DCIIPPQRPT (238 aa). A G1 region spans residues 14 to 21; that stretch reads GHVDSGKS. Residues 70-74 form a G2 region; sequence GITID. Positions 91–94 are G3; sequence DAPG. The interval 153–156 is G4; that stretch reads NKMD. A G5 region spans residues 194-196; sequence SGF. 5-glutamyl glycerylphosphorylethanolamine is present on residues E301 and E374.

This sequence belongs to the TRAFAC class translation factor GTPase superfamily. Classic translation factor GTPase family. EF-Tu/EF-1A subfamily.

It is found in the cytoplasm. Functionally, this protein promotes the GTP-dependent binding of aminoacyl-tRNA to the A-site of ribosomes during protein biosynthesis. The protein is Elongation factor 1-alpha 1 (eft-1) of Oscheius tipulae.